A 131-amino-acid chain; its full sequence is MSESENTEKRWGVAHVHASFNNTLITVTDLTGAETIVKSSGGAVVKQNRDEASPYAAMQMAESVAEDIKAAGIDGLHVRVRGPGGNGNKSPGPGAQATIRALARAGLEIGRIEDVTPIPHDGTRAPKNSRL.

This sequence belongs to the universal ribosomal protein uS11 family. In terms of assembly, part of the 30S ribosomal subunit.

Functionally, located on the platform of the 30S subunit. The polypeptide is Small ribosomal subunit protein uS11 (Haloquadratum walsbyi (strain DSM 16790 / HBSQ001)).